The chain runs to 73 residues: RNA-binding protein Hfq (73 aa).

In terms of domain architecture, Sm spans D8–V68.

This sequence belongs to the Hfq family. Homohexamer.

Functionally, RNA chaperone that binds small regulatory RNA (sRNAs) and mRNAs to facilitate mRNA translational regulation in response to envelope stress, environmental stress and changes in metabolite concentrations. Also binds with high specificity to tRNAs. This Bacillus subtilis (strain 168) protein is RNA-binding protein Hfq.